A 444-amino-acid chain; its full sequence is Xylose isomerase (444 aa).

Catalysis depends on residues H101 and D104. E232, E268, H271, D296, D307, D309, and D339 together coordinate Mg(2+).

This sequence belongs to the xylose isomerase family. In terms of assembly, homotetramer. Mg(2+) is required as a cofactor.

The protein resides in the cytoplasm. The catalysed reaction is alpha-D-xylose = alpha-D-xylulofuranose. This is Xylose isomerase from Thermotoga maritima (strain ATCC 43589 / DSM 3109 / JCM 10099 / NBRC 100826 / MSB8).